The sequence spans 323 residues: Cysteine synthase A (323 aa).

2 residues coordinate hydrogen sulfide: Asn8 and Arg35. N6-(pyridoxal phosphate)lysine is present on Lys42. Pyridoxal 5'-phosphate is bound by residues Asn72 and 177 to 181; that span reads GTGGT. Leu269 serves as a coordination point for hydrogen sulfide. Ser273 is a binding site for pyridoxal 5'-phosphate.

This sequence belongs to the cysteine synthase/cystathionine beta-synthase family. As to quaternary structure, homodimer. Pyridoxal 5'-phosphate serves as cofactor.

The catalysed reaction is O-acetyl-L-serine + hydrogen sulfide = L-cysteine + acetate. Its pathway is amino-acid biosynthesis; L-cysteine biosynthesis; L-cysteine from L-serine: step 2/2. In terms of biological role, two cysteine synthase enzymes are found. Both catalyze the same reaction. Cysteine synthase B can also use thiosulfate in place of sulfide to give cysteine thiosulfonate as a product. This is Cysteine synthase A (cysK) from Salmonella typhi.